Consider the following 215-residue polypeptide: Protein FAM167A (215 aa).

Disordered stretches follow at residues 1-26 (MSVP…PPDD) and 63-109 (RPAA…LTTG). Residues 124–157 (LRKELAEMRLQDQQLARQLMRLRGDINKLKIEQT) adopt a coiled-coil conformation.

This sequence belongs to the FAM167 (SEC) family.

The chain is Protein FAM167A (Fam167a) from Mus musculus (Mouse).